Consider the following 61-residue polypeptide: Photosystem II reaction center protein K (61 aa).

The propeptide occupies 1–24 (MPNILSLTCICFNSVLYPTSFFFA). The chain crosses the membrane as a helical span at residues 32–52 (IFNPIVDIMPVIPLFFFLLAF).

It belongs to the PsbK family. PSII is composed of 1 copy each of membrane proteins PsbA, PsbB, PsbC, PsbD, PsbE, PsbF, PsbH, PsbI, PsbJ, PsbK, PsbL, PsbM, PsbT, PsbX, PsbY, PsbZ, Psb30/Ycf12, at least 3 peripheral proteins of the oxygen-evolving complex and a large number of cofactors. It forms dimeric complexes. Detected in both etioplasts and green leaves; PSII is only assembled in green leaves.

The protein localises to the plastid. The protein resides in the chloroplast thylakoid membrane. One of the components of the core complex of photosystem II (PSII). PSII is a light-driven water:plastoquinone oxidoreductase that uses light energy to abstract electrons from H(2)O, generating O(2) and a proton gradient subsequently used for ATP formation. It consists of a core antenna complex that captures photons, and an electron transfer chain that converts photonic excitation into a charge separation. This chain is Photosystem II reaction center protein K, found in Hordeum vulgare (Barley).